Consider the following 367-residue polypeptide: 3-methyl-2-oxobutanoate dehydrogenase subunit alpha (367 aa).

Thiamine diphosphate-binding positions include 99 to 101 (QYR), 141 to 142 (PI), 170 to 176 (GDGATSE), 200 to 204 (NQWAI), and histidine 269. Residue tyrosine 100 participates in substrate binding. Residues aspartate 171 and asparagine 200 each coordinate Mg(2+).

In terms of assembly, heteromer of E1 alpha (BkdA) and beta (BkdB) subunits. Part of the BCKADH complex, consisting of multiple copies of BkdA/BkdB (E1), BkdC (E2) and Lpd (E3). Mg(2+) serves as cofactor. The cofactor is thiamine diphosphate.

The catalysed reaction is N(6)-[(R)-lipoyl]-L-lysyl-[protein] + 3-methyl-2-oxobutanoate + H(+) = N(6)-[(R)-S(8)-2-methylpropanoyldihydrolipoyl]-L-lysyl-[protein] + CO2. In terms of biological role, component of the branched-chain alpha-ketoacid dehydrogenase (BCKADH) complex, that catalyzes the overall conversion of branched-chain alpha-ketoacids to acyl-CoA and CO(2). The chain is 3-methyl-2-oxobutanoate dehydrogenase subunit alpha (bkdA) from Mycobacterium tuberculosis (strain CDC 1551 / Oshkosh).